The following is a 292-amino-acid chain: Protease HtpX (292 aa).

The next 2 membrane-spanning stretches (helical) occupy residues 5-25 (IFLF…VMSV) and 34-54 (SGLL…SLLL). H140 serves as a coordination point for Zn(2+). E141 is a catalytic residue. Residue H144 participates in Zn(2+) binding. The next 2 helical transmembrane spans lie at 155–175 (LLQG…GGII) and 193–213 (IIVF…AMWF). E218 contributes to the Zn(2+) binding site.

It belongs to the peptidase M48B family. Zn(2+) serves as cofactor.

It is found in the cell inner membrane. The protein is Protease HtpX of Xanthomonas oryzae pv. oryzae (strain MAFF 311018).